The primary structure comprises 539 residues: Glucose-6-phosphate isomerase (539 aa).

The active-site Proton donor is the Glu-353. Catalysis depends on residues His-384 and Lys-505.

The protein belongs to the GPI family.

It localises to the cytoplasm. The enzyme catalyses alpha-D-glucose 6-phosphate = beta-D-fructose 6-phosphate. The protein operates within carbohydrate biosynthesis; gluconeogenesis. Its pathway is carbohydrate degradation; glycolysis; D-glyceraldehyde 3-phosphate and glycerone phosphate from D-glucose: step 2/4. Functionally, catalyzes the reversible isomerization of glucose-6-phosphate to fructose-6-phosphate. The chain is Glucose-6-phosphate isomerase from Ralstonia pickettii (strain 12J).